The primary structure comprises 298 residues: Quinolinate synthase (298 aa).

Iminosuccinate-binding residues include H19 and S36. C81 contacts [4Fe-4S] cluster. Iminosuccinate is bound by residues 107–109 (YVN) and S124. C168 is a [4Fe-4S] cluster binding site. Residues 193-195 (HPE) and T210 each bind iminosuccinate. A [4Fe-4S] cluster-binding site is contributed by C254.

The protein belongs to the quinolinate synthase family. Type 2 subfamily. Requires [4Fe-4S] cluster as cofactor.

Its subcellular location is the cytoplasm. The catalysed reaction is iminosuccinate + dihydroxyacetone phosphate = quinolinate + phosphate + 2 H2O + H(+). Its pathway is cofactor biosynthesis; NAD(+) biosynthesis; quinolinate from iminoaspartate: step 1/1. In terms of biological role, catalyzes the condensation of iminoaspartate with dihydroxyacetone phosphate to form quinolinate. The protein is Quinolinate synthase of Thermotoga sp. (strain RQ2).